A 182-amino-acid chain; its full sequence is Ribosome maturation factor RimM (182 aa).

The 78-residue stretch at 99–176 folds into the PRC barrel domain; it reads DDEYYHADLI…ELPAEIEGDT (78 aa).

The protein belongs to the RimM family. Binds ribosomal protein uS19.

The protein resides in the cytoplasm. Functionally, an accessory protein needed during the final step in the assembly of 30S ribosomal subunit, possibly for assembly of the head region. Essential for efficient processing of 16S rRNA. May be needed both before and after RbfA during the maturation of 16S rRNA. It has affinity for free ribosomal 30S subunits but not for 70S ribosomes. The sequence is that of Ribosome maturation factor RimM from Rhodopseudomonas palustris (strain HaA2).